The primary structure comprises 214 residues: tRNA (guanine-N(7)-)-methyltransferase (214 aa).

Glu-44, Asp-69, Asp-96, and Asp-118 together coordinate S-adenosyl-L-methionine. Residue Asp-118 is part of the active site. Lys-122 contacts substrate. An interaction with RNA region spans residues 124–129 (KHEKRR). Residues Asp-154 and 191 to 194 (TEYE) each bind substrate.

It belongs to the class I-like SAM-binding methyltransferase superfamily. TrmB family.

It carries out the reaction guanosine(46) in tRNA + S-adenosyl-L-methionine = N(7)-methylguanosine(46) in tRNA + S-adenosyl-L-homocysteine. It participates in tRNA modification; N(7)-methylguanine-tRNA biosynthesis. Its function is as follows. Catalyzes the formation of N(7)-methylguanine at position 46 (m7G46) in tRNA. This Enterococcus faecalis (strain ATCC 700802 / V583) protein is tRNA (guanine-N(7)-)-methyltransferase.